Reading from the N-terminus, the 333-residue chain is UDP-N-acetylglucosamine--N-acetylmuramyl-(pentapeptide) pyrophosphoryl-undecaprenol N-acetylglucosamine transferase (333 aa).

Residues 10–12 (TGG), asparagine 124, serine 177, and glutamine 275 contribute to the UDP-N-acetyl-alpha-D-glucosamine site.

The protein belongs to the glycosyltransferase 28 family. MurG subfamily.

Its subcellular location is the cell inner membrane. It catalyses the reaction di-trans,octa-cis-undecaprenyl diphospho-N-acetyl-alpha-D-muramoyl-L-alanyl-D-glutamyl-meso-2,6-diaminopimeloyl-D-alanyl-D-alanine + UDP-N-acetyl-alpha-D-glucosamine = di-trans,octa-cis-undecaprenyl diphospho-[N-acetyl-alpha-D-glucosaminyl-(1-&gt;4)]-N-acetyl-alpha-D-muramoyl-L-alanyl-D-glutamyl-meso-2,6-diaminopimeloyl-D-alanyl-D-alanine + UDP + H(+). It functions in the pathway cell wall biogenesis; peptidoglycan biosynthesis. Cell wall formation. Catalyzes the transfer of a GlcNAc subunit on undecaprenyl-pyrophosphoryl-MurNAc-pentapeptide (lipid intermediate I) to form undecaprenyl-pyrophosphoryl-MurNAc-(pentapeptide)GlcNAc (lipid intermediate II). The sequence is that of UDP-N-acetylglucosamine--N-acetylmuramyl-(pentapeptide) pyrophosphoryl-undecaprenol N-acetylglucosamine transferase from Nitratiruptor sp. (strain SB155-2).